Reading from the N-terminus, the 417-residue chain is Phosphoglycerate kinase 1 (417 aa).

Ser-2 carries the N-acetylserine modification. Ser-2 and Ser-4 each carry phosphoserine. Residues 2-186 (SLSNKLTLDK…VGVNLPQKAG (185 aa)) form a globular domain-1 region. The residue at position 6 (Lys-6) is an N6-succinyllysine. Position 11 is an N6-acetyllysine (Lys-11). (2R)-3-phosphoglycerate-binding residues include Val-23, Asp-24, Phe-25, Asn-26, Gln-38, and Arg-39. The tract at residues 38–43 (QRIKAA) is mitochondrial targeting region exposed following cis-trans isomerization by PIN1 and recognized by the TOM complex for mitochondrial translocation of the protein. Lys-48 bears the N6-acetyllysine; alternate mark. An N6-succinyllysine; alternate modification is found at Lys-48. Residues Ser-62, His-63, Gly-65, and Arg-66 each contribute to the (2R)-3-phosphoglycerate site. Lys-75 carries the N6-acetyllysine modification. Tyr-76 is modified (phosphotyrosine). Lys-86 and Lys-91 each carry N6-acetyllysine. Lys-97 bears the N6-acetyllysine; alternate mark. The residue at position 97 (Lys-97) is an N6-(2-hydroxyisobutyryl)lysine; alternate. Leu-122 and Arg-123 together coordinate (2R)-3-phosphoglycerate. Residue Lys-131 is modified to N6-acetyllysine; alternate. Position 131 is an N6-malonyllysine; alternate (Lys-131). At Lys-146 the chain carries N6-acetyllysine. (2R)-3-phosphoglycerate is bound by residues His-170 and Arg-171. The interval 187–190 (GFLM) is linker. At Lys-191 the chain carries N6-succinyllysine. The interval 191–417 (KKELNYFAKA…LPGVDALSNV (227 aa)) is globular domain-2. The residue at position 196 (Tyr-196) is a Phosphotyrosine. Lys-199 bears the N6-acetyllysine mark. Position 203 is a phosphoserine (Ser-203). Gly-214 contributes to the ADP binding site. Gly-214 provides a ligand contact to CDP. Positions 215 and 216 each coordinate AMP. Residue Ala-215 participates in ATP binding. Ala-215 lines the Mg(2+) pocket. Position 216 is an N6-(2-hydroxyisobutyryl)lysine (Lys-216). Mg(2+)-binding residues include Ala-218 and Asp-219. Position 219 (Asp-219) interacts with CDP. Lys-220 contributes to the AMP binding site. Lys-220 lines the ATP pocket. Position 220 is an N6-(2-hydroxyisobutyryl)lysine (Lys-220). Gly-238 is a binding site for ADP. Gly-238 contacts CDP. AMP is bound at residue Gly-239. Gly-239 lines the ATP pocket. N6-acetyllysine occurs at positions 267 and 291. Gly-313 contributes to the AMP binding site. ATP is bound at residue Gly-313. N6-(2-hydroxyisobutyryl)lysine is present on Lys-323. Residues Gly-338, Val-340, and Phe-343 each coordinate CDP. An ADP-binding site is contributed by Phe-343. Residue Glu-344 participates in AMP binding. Glu-344 is a binding site for ATP. Residue Lys-361 is modified to N6-acetyllysine. Residues Asp-375 and Thr-376 each contribute to the ATP site. Asp-375 contributes to the Mg(2+) binding site. The tract at residues 406–417 (KVLPGVDALSNV) is associated with globular domain 1.

This sequence belongs to the phosphoglycerate kinase family. As to quaternary structure, monomer. Interacts with kinase MAPK1/ERK2; the interaction is direct, occurs under hypoxic conditions, and promotes its interaction with PIN1. Interacts with peptidyl-prolyl cis-trans isomerase PIN1; the interaction is direct, occurs under hypoxic conditions, and targets the protein to the mitochondrion by promoting interactions with the TOM complex. Interacts with mitochondrial circRNA mcPGK1 (via its 2nd stem-loop); the interaction is direct and targets the protein to the mitochondrion by promoting interactions with the TOM complex. Interacts with pyruvate dehydrogenase kinase PDK1; the interaction is direct, occurs under hypoxic conditions and leads to PDK1-mediated inhibition of pyruvate dehydrogenase complex activity. Requires Mg(2+) as cofactor. In terms of processing, phosphorylated at Ser-203 by MAPK1/ERK2 under hypoxic conditions, which promotes its mitochondrial targeting.

The protein localises to the cytoplasm. It localises to the cytosol. It is found in the mitochondrion matrix. The catalysed reaction is (2R)-3-phosphoglycerate + ATP = (2R)-3-phospho-glyceroyl phosphate + ADP. The enzyme catalyses L-seryl-[protein] + ATP = O-phospho-L-seryl-[protein] + ADP + H(+). It functions in the pathway carbohydrate degradation; glycolysis; pyruvate from D-glyceraldehyde 3-phosphate: step 2/5. Its function is as follows. Catalyzes one of the two ATP producing reactions in the glycolytic pathway via the reversible conversion of 1,3-diphosphoglycerate to 3-phosphoglycerate. Both L- and D- forms of purine and pyrimidine nucleotides can be used as substrates, but the activity is much lower on pyrimidines. In addition to its role as a glycolytic enzyme, it seems that PGK-1 acts as a polymerase alpha cofactor protein (primer recognition protein). Acts as a protein kinase when localized to the mitochondrion where it phosphorylates pyruvate dehydrogenase kinase PDK1 to inhibit pyruvate dehydrogenase complex activity and suppress the formation of acetyl-coenzyme A from pyruvate, and consequently inhibit oxidative phosphorylation and promote glycolysis. May play a role in sperm motility. In Equus caballus (Horse), this protein is Phosphoglycerate kinase 1 (PGK1).